The primary structure comprises 80 residues: MRKDIHPEYRPVVFMDTSTGYQFLSGSTKRSNETVEFEGETYPLIRVEISSDSHPFYTGRQKFTQADGRVDRFNKKYGLK.

The protein belongs to the bacterial ribosomal protein bL31 family. Type B subfamily. As to quaternary structure, part of the 50S ribosomal subunit.

The chain is Large ribosomal subunit protein bL31B from Streptococcus sanguinis (strain SK36).